Reading from the N-terminus, the 281-residue chain is Energy-coupling factor transporter ATP-binding protein EcfA1 (281 aa).

An ABC transporter domain is found at 6-242 (IDVKHLDYRY…GEALIKMGLD (237 aa)). Position 42 to 49 (42 to 49 (GHNGSGKS)) interacts with ATP.

This sequence belongs to the ABC transporter superfamily. Energy-coupling factor EcfA family. In terms of assembly, forms a stable energy-coupling factor (ECF) transporter complex composed of 2 membrane-embedded substrate-binding proteins (S component), 2 ATP-binding proteins (A component) and 2 transmembrane proteins (T component).

The protein resides in the cell membrane. Functionally, ATP-binding (A) component of a common energy-coupling factor (ECF) ABC-transporter complex. Unlike classic ABC transporters this ECF transporter provides the energy necessary to transport a number of different substrates. This is Energy-coupling factor transporter ATP-binding protein EcfA1 from Lactiplantibacillus plantarum (strain ATCC BAA-793 / NCIMB 8826 / WCFS1) (Lactobacillus plantarum).